A 256-amino-acid polypeptide reads, in one-letter code: Follistatin-related protein 3 (256 aa).

Positions 1–23 are cleaved as a signal peptide; sequence MRPGALWPLLWGALVWAVGSVGA. A TB domain is found at 34-105; sequence GVCWLQQGKE…SCDGVECGPG (72 aa). 8 cysteine pairs are disulfide-bonded: Cys-36–Cys-59, Cys-46–Cys-90, Cys-60–Cys-93, Cys-97–Cys-108, Cys-102–Cys-117, Cys-119–Cys-151, Cys-123–Cys-144, and Cys-133–Cys-165. Asn-71 carries an N-linked (GlcNAc...) asparagine glycan. In terms of domain architecture, Follistatin-like 1 spans 97 to 117; sequence CDGVECGPGKACRMLGGRPHC. Kazal-like domains follow at residues 111–167 and 187–243; these read LGGR…RCQK and SAHC…ICTG. The 24-residue stretch at 168–191 folds into the Follistatin-like 2 domain; it reads SCAQVVCPRPQSCLVDQTGSAHCV. 3 disulfides stabilise this stretch: Cys-193–Cys-227, Cys-198–Cys-220, and Cys-209–Cys-241. Asn-213 carries an N-linked (GlcNAc...) asparagine glycan.

In terms of assembly, interacts with INHBA and INHBB. Interacts with FN1. Interacts with ADAM12. Interacts with MLLT10; the interaction enhances MLLT10 in vitro transcriptional activity and self-association. Interacts with MSTN.

Its subcellular location is the secreted. It localises to the nucleus. Functionally, the secreted form is a binding and antagonizing protein for members of the TGF-beta family, such as activin, BMP2 and MSTN. Inhibits activin A-, activin B-, BMP2- and MSDT-induced cellular signaling; more effective on activin A than on activin B. Involved in bone formation; inhibits osteoclast differentiation. Involved in hematopoiesis; involved in differentiation of hemopoietic progenitor cells, increases hematopoietic cell adhesion to fibronectin and seems to contribute to the adhesion of hematopoietic precursor cells to the bone marrow stroma. The nuclear form is probably involved in transcriptional regulation via interaction with MLLT10. This chain is Follistatin-related protein 3 (Fstl3), found in Rattus norvegicus (Rat).